The chain runs to 363 residues: Probable matrix metalloproteinase 095L (363 aa).

The signal sequence occupies residues 1 to 25; sequence MSVDSFTSRLAVVMTAVVLVWWAQA. Positions 26–126 are cleaved as a propeptide — activation peptide; the sequence is LPVPSPRRGE…PRCGVPDVSK (101 aa). The Cysteine switch motif lies at 117-124; the sequence is PRCGVPDV. Residues Cys119 and His275 each contribute to the Zn(2+) site. Glu276 is a catalytic residue. Zn(2+)-binding residues include His279 and His285.

Belongs to the peptidase M10A family. It depends on Zn(2+) as a cofactor.

The protein resides in the secreted. Probable endopeptidase. In Aedes vexans (Inland floodwater mosquito), this protein is Probable matrix metalloproteinase 095L.